Reading from the N-terminus, the 308-residue chain is Isochorismatase domain-containing protein 1 (308 aa).

This sequence belongs to the isochorismatase family.

This chain is Isochorismatase domain-containing protein 1 (isoc1), found in Xenopus tropicalis (Western clawed frog).